We begin with the raw amino-acid sequence, 180 residues long: Putative manganese efflux pump MntP (180 aa).

The next 6 helical transmembrane spans lie at Leu6 to Leu26, Ile34 to Leu54, Ala67 to Trp87, Phe102 to Thr122, Leu131 to Phe151, and Gly160 to Phe180.

It belongs to the MntP (TC 9.B.29) family.

It is found in the cell membrane. Probably functions as a manganese efflux pump. The protein is Putative manganese efflux pump MntP of Pelotomaculum thermopropionicum (strain DSM 13744 / JCM 10971 / SI).